We begin with the raw amino-acid sequence, 323 residues long: Probable cell division protein WhiA (323 aa).

The segment at residues 275–309 (TLKELGEMLTTGQVSKSGINHRLRKLDQIAERLRS) is a DNA-binding region (H-T-H motif).

It belongs to the WhiA family.

Functionally, involved in cell division and chromosome segregation. The protein is Probable cell division protein WhiA of Listeria welshimeri serovar 6b (strain ATCC 35897 / DSM 20650 / CCUG 15529 / CIP 8149 / NCTC 11857 / SLCC 5334 / V8).